A 147-amino-acid polypeptide reads, in one-letter code: Globin, polymeric component P2 (147 aa).

Residues 2–146 (PLTADQVAAL…ISDALVAGLE (145 aa)) enclose the Globin domain. Residue H96 participates in heme b binding.

Belongs to the globin family. In terms of assembly, polymer.

The protein is Globin, polymeric component P2 of Glycera dibranchiata (Bloodworm).